Reading from the N-terminus, the 161-residue chain is tRNA-specific adenosine deaminase (161 aa).

One can recognise a CMP/dCMP-type deaminase domain in the interval 2 to 120 (TQDELYMKEA…GTLMNLLQEE (119 aa)). Histidine 53 is a Zn(2+) binding site. Residue glutamate 55 is the Proton donor of the active site. Zn(2+)-binding residues include cysteine 83 and cysteine 86.

Belongs to the cytidine and deoxycytidylate deaminase family. Homodimer. The cofactor is Zn(2+).

It carries out the reaction adenosine(34) in tRNA + H2O + H(+) = inosine(34) in tRNA + NH4(+). Catalyzes the deamination of adenosine to inosine at the wobble position 34 of tRNA(Arg2). The protein is tRNA-specific adenosine deaminase of Bacillus subtilis (strain 168).